The sequence spans 507 residues: ATP synthase subunit alpha, chloroplastic (507 aa).

170-177 (GDRQTGKT) lines the ATP pocket.

Belongs to the ATPase alpha/beta chains family. In terms of assembly, F-type ATPases have 2 components, CF(1) - the catalytic core - and CF(0) - the membrane proton channel. CF(1) has five subunits: alpha(3), beta(3), gamma(1), delta(1), epsilon(1). CF(0) has four main subunits: a, b, b' and c.

It is found in the plastid. The protein resides in the chloroplast thylakoid membrane. The catalysed reaction is ATP + H2O + 4 H(+)(in) = ADP + phosphate + 5 H(+)(out). In terms of biological role, produces ATP from ADP in the presence of a proton gradient across the membrane. The alpha chain is a regulatory subunit. In Ipomoea purpurea (Common morning glory), this protein is ATP synthase subunit alpha, chloroplastic.